The following is a 194-amino-acid chain: Fe/S biogenesis protein NfuA (194 aa).

Residues C151 and C154 each coordinate [4Fe-4S] cluster.

It belongs to the NfuA family. As to quaternary structure, homodimer. It depends on [4Fe-4S] cluster as a cofactor.

Its function is as follows. Involved in iron-sulfur cluster biogenesis. Binds a 4Fe-4S cluster, can transfer this cluster to apoproteins, and thereby intervenes in the maturation of Fe/S proteins. Could also act as a scaffold/chaperone for damaged Fe/S proteins. This Actinobacillus succinogenes (strain ATCC 55618 / DSM 22257 / CCUG 43843 / 130Z) protein is Fe/S biogenesis protein NfuA.